Here is a 284-residue protein sequence, read N- to C-terminus: Tropomyosin (284 aa).

Disordered stretches follow at residues 1 to 27 and 99 to 131; these read MDAI…QMEQ and YERS…KVLE. A coiled-coil region spans residues 1 to 273; that stretch reads MDAIKKKMQA…KERYKAISDD (273 aa). The segment covering 102–131 has biased composition (basic and acidic residues); that stretch reads SEEKLNSTTEKLEEASKAADESERNRKVLE.

It belongs to the tropomyosin family. As to quaternary structure, homodimer.

Its function is as follows. Tropomyosin, in association with the troponin complex, plays a central role in the calcium dependent regulation of muscle contraction. The protein is Tropomyosin of Mimachlamys nobilis (Noble scallop).